The chain runs to 193 residues: Mesogenin-1 (193 aa).

The tract at residues 34 to 59 (GPFELNQASPSQSLSPAPSLESYSSS) is disordered. A compositionally biased stretch (low complexity) spans 40–59 (QASPSQSLSPAPSLESYSSS). A bHLH domain is found at 124–178 (QRRRKASEREKLRMRTLADALHTLRNYLPPVYSQRGQPLTKIQTLKYTIKYIGEL).

It localises to the nucleus. Involved in specifying the paraxial, but not dorsal, mesoderm. May regulate the expression of T-box transcription factors required for mesoderm formation and differentiation. This chain is Mesogenin-1 (MSGN1), found in Homo sapiens (Human).